Here is a 591-residue protein sequence, read N- to C-terminus: Parathyroid hormone/parathyroid hormone-related peptide receptor (591 aa).

The first 26 residues, 1–26 (MGTARIAPSLALLLCCPVLSSAYALV), serve as a signal peptide directing secretion. At 27-188 (DADDVFTKEE…REREVFDRLG (162 aa)) the chain is on the extracellular side. 3 cysteine pairs are disulfide-bonded: cysteine 48–cysteine 117, cysteine 108–cysteine 148, and cysteine 131–cysteine 170. The segment at 67-104 (KGWTPASTSGKPRKEKAPGKFYPESKENKDVPTGSRRR) is disordered. The span at 81–96 (EKAPGKFYPESKENKD) shows a compositional bias: basic and acidic residues. Residues asparagine 151, asparagine 161, asparagine 166, and asparagine 176 are each glycosylated (N-linked (GlcNAc...) asparagine). The chain crosses the membrane as a helical span at residues 189 to 212 (MIYTVGYSMSLASLTVAVLILAYF). The Cytoplasmic portion of the chain corresponds to 213-219 (RRLHCTR). Residues 220-239 (NYIHMHMFLSFMLRAASIFV) form a helical membrane-spanning segment. At 240-282 (KDAVLYSGFTLDEAERLTEEELHIIAQVPPPPAAAAVGYAGCR) the chain is on the extracellular side. Residues 283-306 (VAVTFFLYFLATNYYWILVEGLYL) form a helical membrane-spanning segment. The Cytoplasmic segment spans residues 307–320 (HSLIFMAFFSEKKY). The helical transmembrane segment at 321–342 (LWGFTIFGWGLPAVFVAVWVGV) threads the bilayer. Residues 343–361 (RATLANTGCWDLSSGHKKW) lie on the Extracellular side of the membrane. The chain crosses the membrane as a helical span at residues 362 to 382 (IIQVPILASVVLNFILFINII). Residues 383 to 409 (RVLATKLRETNAGRCDTRQQYRKLLRS) are Cytoplasmic-facing. The chain crosses the membrane as a helical span at residues 410 to 428 (TLVLVPLFGVHYTVFMALP). The Extracellular segment spans residues 429-440 (YTEVSGTLWQIQ). Residues 441–463 (MHYEMLFNSFQGFFVAIIYCFCN) form a helical membrane-spanning segment. Residues 464 to 591 (GEVQAEIRKS…LLQEEWETVM (128 aa)) are Cytoplasmic-facing. Positions 474–477 (WSRW) match the Important for interaction with G proteins motif.

The protein belongs to the G-protein coupled receptor 2 family. In terms of assembly, homodimer in the absence of bound ligand. Peptide hormone binding leads to dissociation of the homodimer. Post-translationally, N-glycosylated. In terms of tissue distribution, detected in kidney.

The protein localises to the cell membrane. Functionally, G-protein-coupled receptor for parathyroid hormone (PTH) and for parathyroid hormone-related peptide (PTHLH). Ligand binding causes a conformation change that triggers signaling via guanine nucleotide-binding proteins (G proteins) and modulates the activity of downstream effectors, such as adenylate cyclase (cAMP). PTH1R is coupled to G(s) G alpha proteins and mediates activation of adenylate cyclase activity. PTHLH dissociates from PTH1R more rapidly than PTH; as consequence, the cAMP response induced by PTHLH decays faster than the response induced by PTH. In Mus musculus (Mouse), this protein is Parathyroid hormone/parathyroid hormone-related peptide receptor (Pth1r).